A 406-amino-acid polypeptide reads, in one-letter code: tRNA-specific 2-thiouridylase MnmA (406 aa).

Residues 42 to 49 (GLSGGVDS) and leucine 68 contribute to the ATP site. Cysteine 129 serves as the catalytic Nucleophile. Cysteines 129 and 237 form a disulfide. Glycine 154 contacts ATP. The interval 187–189 (KDQ) is interaction with tRNA. Cysteine 237 functions as the Cysteine persulfide intermediate in the catalytic mechanism. The interaction with tRNA stretch occupies residues 342-343 (RY).

Belongs to the MnmA/TRMU family.

It localises to the cytoplasm. It carries out the reaction S-sulfanyl-L-cysteinyl-[protein] + uridine(34) in tRNA + AH2 + ATP = 2-thiouridine(34) in tRNA + L-cysteinyl-[protein] + A + AMP + diphosphate + H(+). Its function is as follows. Catalyzes the 2-thiolation of uridine at the wobble position (U34) of tRNA, leading to the formation of s(2)U34. In Prochlorococcus marinus (strain MIT 9211), this protein is tRNA-specific 2-thiouridylase MnmA.